A 298-amino-acid polypeptide reads, in one-letter code: N-acetylmuramic acid 6-phosphate etherase (298 aa).

The 164-residue stretch at 55-218 folds into the SIS domain; that stretch reads ASKRYREGGR…STGVMIKQGK (164 aa). Residue E83 is the Proton donor of the active site. The active site involves E114.

The protein belongs to the GCKR-like family. MurNAc-6-P etherase subfamily. Homodimer.

It catalyses the reaction N-acetyl-D-muramate 6-phosphate + H2O = N-acetyl-D-glucosamine 6-phosphate + (R)-lactate. The protein operates within amino-sugar metabolism; N-acetylmuramate degradation. Specifically catalyzes the cleavage of the D-lactyl ether substituent of MurNAc 6-phosphate, producing GlcNAc 6-phosphate and D-lactate. This Lactobacillus johnsonii (strain CNCM I-12250 / La1 / NCC 533) protein is N-acetylmuramic acid 6-phosphate etherase.